The sequence spans 4545 residues: Prolow-density lipoprotein receptor-related protein 1 (4545 aa).

An N-terminal signal peptide occupies residues methionine 1–glycine 19. Residues alanine 20–serine 4424 are Extracellular-facing. LDL-receptor class A domains are found at residues threonine 27 to proline 66 and arginine 72 to arginine 110. 6 disulfide bridges follow: cysteine 28/cysteine 41, cysteine 35/cysteine 54, cysteine 48/cysteine 65, cysteine 73/cysteine 86, cysteine 80/cysteine 99, and cysteine 93/cysteine 109. 5 N-linked (GlcNAc...) asparagine glycosylation sites follow: asparagine 115, asparagine 137, asparagine 186, asparagine 240, and asparagine 275. 3 LDL-receptor class B repeats span residues glycine 293–methionine 335, glycine 336–serine 379, and arginine 380–tyrosine 423. Asparagine 358 carries N-linked (GlcNAc...) asparagine glycosylation. Asparagine 447 is a glycosylation site (N-linked (GlcNAc...) asparagine). LDL-receptor class B repeat units lie at residues glycine 572–glycine 614, aspartate 615–asparagine 660, glycine 661–alanine 711, and glycine 712–tyrosine 755. The HAT 1 repeat unit spans residues threonine 639–aspartate 671. An N-linked (GlcNAc...) asparagine glycan is attached at asparagine 730. 8 consecutive LDL-receptor class A domains span residues glutamine 854–histidine 892, threonine 895–serine 933, threonine 936–alanine 973, threonine 976–serine 1013, serine 1015–threonine 1053, glycine 1062–glutamate 1099, valine 1104–glutamate 1142, and alanine 1145–aspartate 1184. Intrachain disulfides connect cysteine 855–cysteine 867, cysteine 862–cysteine 880, cysteine 874–cysteine 891, cysteine 896–cysteine 908, cysteine 903–cysteine 921, cysteine 915–cysteine 932, cysteine 937–cysteine 949, cysteine 944–cysteine 962, cysteine 956–cysteine 972, cysteine 977–cysteine 990, cysteine 985–cysteine 1003, cysteine 997–cysteine 1012, cysteine 1016–cysteine 1028, cysteine 1023–cysteine 1041, cysteine 1035–cysteine 1052, cysteine 1063–cysteine 1076, cysteine 1070–cysteine 1089, cysteine 1083–cysteine 1098, cysteine 1105–cysteine 1119, cysteine 1113–cysteine 1132, cysteine 1126–cysteine 1141, cysteine 1146–cysteine 1160, cysteine 1153–cysteine 1173, and cysteine 1167–cysteine 1183. Positions 872, 875, 877, 879, 885, and 886 each coordinate Ca(2+). The N-linked (GlcNAc...) asparagine glycan is linked to asparagine 929. Residues tryptophan 1033, aspartate 1036, aspartate 1038, aspartate 1040, aspartate 1046, and glutamate 1047 each coordinate Ca(2+). A glycan (N-linked (GlcNAc...) asparagine) is linked at asparagine 1051. Ca(2+) contacts are provided by tryptophan 1081, aspartate 1084, aspartate 1086, aspartate 1088, aspartate 1094, and glutamate 1095. An N-linked (GlcNAc...) asparagine glycan is attached at asparagine 1156. N-linked (GlcNAc...) asparagine glycosylation is found at asparagine 1196 and asparagine 1219. LDL-receptor class B repeat units follow at residues serine 1310 to alanine 1356, glycine 1357 to aspartate 1399, glycine 1400 to glutamate 1446, lysine 1447 to glutamate 1491, and valine 1492 to serine 1532. HAT repeat units lie at residues threonine 1380–arginine 1413 and methionine 1470–alanine 1503. 5 N-linked (GlcNAc...) asparagine glycosylation sites follow: asparagine 1512, asparagine 1559, asparagine 1576, asparagine 1617, and asparagine 1646. LDL-receptor class B repeat units follow at residues glutamine 1628–serine 1670, arginine 1671–arginine 1714, glycine 1715–glutamate 1754, and serine 1755–lysine 1799. Residues valine 1653 to glutamine 1684 form an HAT 4 repeat. Residues asparagine 1724, asparagine 1734, asparagine 1764, asparagine 1826, and asparagine 1934 are each glycosylated (N-linked (GlcNAc...) asparagine). LDL-receptor class B repeat units follow at residues aspartate 1935 to alanine 1977, glycine 1978 to lysine 2020, glycine 2021 to glycine 2064, and glycine 2065 to phenylalanine 2108. An N-linked (GlcNAc...) asparagine glycan is attached at asparagine 1996. The residue at position 2010 (lysine 2010) is an N6-acetyllysine. Asparagine 2049 is a glycosylation site (N-linked (GlcNAc...) asparagine). Residues asparagine 2118 and asparagine 2128 are each glycosylated (N-linked (GlcNAc...) asparagine). 5 LDL-receptor class B repeats span residues asparagine 2254–tryptophan 2295, aspartate 2296–glutamine 2344, asparagine 2345–alanine 2389, glutamate 2390–histidine 2432, and isoleucine 2433–aspartate 2474. HAT repeat units follow at residues threonine 2277–threonine 2309, threonine 2325–serine 2358, and histidine 2411–glutamine 2444. Residues asparagine 2473, asparagine 2503, and asparagine 2522 are each glycosylated (N-linked (GlcNAc...) asparagine). LDL-receptor class A domains follow at residues serine 2524–asparagine 2563, arginine 2566–asparagine 2602, alanine 2605–serine 2641, asparagine 2639–proline 2690, arginine 2696–asparagine 2732, phenylalanine 2734–glutamate 2771, and threonine 2774–leucine 2814. Intrachain disulfides connect cysteine 2525–cysteine 2538, cysteine 2533–cysteine 2551, cysteine 2545–cysteine 2562, cysteine 2567–cysteine 2579, cysteine 2574–cysteine 2592, and cysteine 2586–cysteine 2601. The N-linked (GlcNAc...) asparagine glycan is linked to asparagine 2602. 15 cysteine pairs are disulfide-bonded: cysteine 2606-cysteine 2618, cysteine 2613-cysteine 2631, cysteine 2625-cysteine 2640, cysteine 2640-cysteine 2667, cysteine 2645-cysteine 2680, cysteine 2674-cysteine 2689, cysteine 2697-cysteine 2709, cysteine 2704-cysteine 2722, cysteine 2716-cysteine 2731, cysteine 2735-cysteine 2747, cysteine 2742-cysteine 2760, cysteine 2754-cysteine 2770, cysteine 2775-cysteine 2788, cysteine 2782-cysteine 2801, and cysteine 2795-cysteine 2813. Residues asparagine 2621 and asparagine 2639 are each glycosylated (N-linked (GlcNAc...) asparagine). The N-linked (GlcNAc...) asparagine glycan is linked to asparagine 2816. LDL-receptor class A domains follow at residues threonine 2818–glutamate 2855, threonine 2858–threonine 2899, and lysine 2904–histidine 2941. 11 disulfide bridges follow: cysteine 2819/cysteine 2831, cysteine 2826/cysteine 2844, cysteine 2838/cysteine 2854, cysteine 2859/cysteine 2871, cysteine 2866/cysteine 2885, cysteine 2879/cysteine 2898, cysteine 2905/cysteine 2918, cysteine 2913/cysteine 2931, cysteine 2925/cysteine 2940, cysteine 2987/cysteine 2997, and cysteine 2993/cysteine 3006. A glycan (N-linked (GlcNAc...) asparagine) is linked at asparagine 2906. The EGF-like 1; calcium-binding domain occupies aspartate 2983–aspartate 3018. Asparagine 3049 and asparagine 3090 each carry an N-linked (GlcNAc...) asparagine glycan. LDL-receptor class B repeat units lie at residues glutamine 3070–glycine 3114, glycine 3115–asparagine 3157, glycine 3158–threonine 3201, glutamate 3202–tyrosine 3244, and valine 3245–leucine 3285. HAT repeat units follow at residues glutamate 3128–isoleucine 3171 and arginine 3224–asparagine 3256. Residues asparagine 3265 and asparagine 3334 are each glycosylated (N-linked (GlcNAc...) asparagine). 11 consecutive LDL-receptor class A domains span residues asparagine 3334–proline 3371, lysine 3374–aspartate 3410, valine 3413–proline 3450, threonine 3453–threonine 3491, threonine 3494–aspartate 3533, threonine 3536–threonine 3572, proline 3575–threonine 3611, arginine 3613–glycine 3649, threonine 3654–threonine 3692, glutamine 3695–glutamate 3733, and histidine 3741–serine 3778. Cystine bridges form between cysteine 3335-cysteine 3347, cysteine 3342-cysteine 3360, cysteine 3354-cysteine 3370, cysteine 3375-cysteine 3387, cysteine 3382-cysteine 3400, cysteine 3394-cysteine 3409, cysteine 3414-cysteine 3427, cysteine 3421-cysteine 3440, cysteine 3434-cysteine 3449, cysteine 3454-cysteine 3467, cysteine 3461-cysteine 3480, cysteine 3474-cysteine 3490, cysteine 3495-cysteine 3508, cysteine 3502-cysteine 3521, cysteine 3515-cysteine 3532, cysteine 3537-cysteine 3549, cysteine 3544-cysteine 3562, cysteine 3556-cysteine 3571, cysteine 3576-cysteine 3588, cysteine 3583-cysteine 3601, cysteine 3595-cysteine 3610, cysteine 3614-cysteine 3626, cysteine 3621-cysteine 3639, cysteine 3633-cysteine 3648, cysteine 3655-cysteine 3667, cysteine 3662-cysteine 3680, cysteine 3674-cysteine 3691, cysteine 3696-cysteine 3710, cysteine 3704-cysteine 3723, cysteine 3717-cysteine 3732, cysteine 3742-cysteine 3755, cysteine 3750-cysteine 3768, and cysteine 3762-cysteine 3777. N-linked (GlcNAc...) asparagine glycosylation is present at asparagine 3489. The N-linked (GlcNAc...) asparagine glycan is linked to asparagine 3663. 2 N-linked (GlcNAc...) asparagine glycosylation sites follow: asparagine 3789 and asparagine 3840. The LDL-receptor class B 31 repeat unit spans residues glycine 3913–isoleucine 3925. A glycan (N-linked (GlcNAc...) asparagine) is linked at asparagine 3954. LDL-receptor class B repeat units follow at residues glycine 3971–arginine 4013, glycine 4014–asparagine 4057, and glutamate 4058–tyrosine 4102. Residues threonine 3995–isoleucine 4027 form an HAT 10 repeat. N-linked (GlcNAc...) asparagine glycosylation is found at asparagine 4076, asparagine 4126, and asparagine 4180. EGF-like domains follow at residues arginine 4197 to aspartate 4230, glutamate 4233 to threonine 4269, glutamine 4270 to aspartate 4302, and glutamine 4305 to glutamate 4341. 10 disulfide bridges follow: cysteine 4201–cysteine 4211, cysteine 4205–cysteine 4221, cysteine 4237–cysteine 4247, cysteine 4241–cysteine 4257, cysteine 4259–cysteine 4268, cysteine 4273–cysteine 4283, cysteine 4277–cysteine 4293, cysteine 4309–cysteine 4319, cysteine 4313–cysteine 4329, and cysteine 4331–cysteine 4340. Asparagine 4280 carries N-linked (GlcNAc...) asparagine glycosylation. An N-linked (GlcNAc...) asparagine glycan is attached at asparagine 4365. Residues leucine 4376–glutamate 4410 enclose the EGF-like 6 domain. 3 cysteine pairs are disulfide-bonded: cysteine 4378–cysteine 4388, cysteine 4382–cysteine 4398, and cysteine 4400–cysteine 4409. A helical membrane pass occupies residues isoleucine 4425–tyrosine 4445. Topologically, residues lysine 4446–alanine 4545 are cytoplasmic. The segment at lysine 4446–alanine 4545 is interaction with MAFB. At threonine 4461 the chain carries Phosphothreonine. A Phosphotyrosine modification is found at tyrosine 4508. Residues serine 4518, serine 4521, and serine 4524 each carry the phosphoserine modification.

It belongs to the LDLR family. Heterodimer of an 85-kDa membrane-bound carboxyl subunit and a non-covalently attached 515-kDa N-terminal subunit. Intracellular domain interacts with MAFB. Found in a complex with PID1/PCLI1, LRP1 and CUBNI. Interacts with SNX17, PID1/PCLI1, PDGF and CUBN. The intracellular domain interacts with SHC1, GULP1 and DAB1. Can weakly interact (via NPXY motif) with DAB2 (via PID domain); the interaction is enhanced by tyrosine phosphorylation of the NPXY motif. Interacts with MDK; promotes neuronal survival. Interacts with LRPAP1; this interaction is followed by rapid internalization. Interacts with uPA/PLAU and PAI1/SERPINE1, either individually or in complex with each other, leading to rapid endocytosis; this interaction is abolished in the presence of LRPAP1/RAP. Also interacts with tPA/PLAT alone or in complex with SERPINE1. Interacts with the urokinase receptor PLAUR; this interaction leads to PLAUR internalization and is impaired in the presence of SORL1. Interacts with PDGFB. Interacts with TAU/MAPT, leading to endocytosis; this interaction is reduced in the presence of LRPAP1/RAP. Interacts with IGFBP3. Interacts with ADGRG6. Cleaved into a 85 kDa membrane-spanning subunit (LRP-85) and a 515 kDa large extracellular domain (LRP-515) that remains non-covalently associated. Gamma-secretase-dependent cleavage of LRP-85 releases the intracellular domain from the membrane. Post-translationally, phosphorylated on serine and threonine residues. In terms of processing, phosphorylated on tyrosine residues upon stimulation with PDGF. Tyrosine phosphorylation promotes interaction with SHC1.

The protein localises to the cell membrane. It localises to the membrane. Its subcellular location is the coated pit. It is found in the golgi outpost. The protein resides in the cytoplasm. The protein localises to the cytoskeleton. It localises to the microtubule organizing center. Its subcellular location is the nucleus. Functionally, endocytic receptor involved in endocytosis and in phagocytosis of apoptotic cells. Required for early embryonic development. Involved in cellular lipid homeostasis. Involved in the plasma clearance of chylomicron remnants and activated LRPAP1 (alpha 2-macroglobulin), as well as the local metabolism of complexes between plasminogen activators and their endogenous inhibitors. Acts as an LRPAP1 alpha-2-macroglobulin receptor. Acts as a TAU/MAPT receptor and controls the endocytosis of TAU/MAPT as well as its subsequent spread. May modulate cellular events, such as APP metabolism, kinase-dependent intracellular signaling, neuronal calcium signaling as well as neurotransmission. Also acts as a receptor for IGFBP3 to mediate cell growth inhibition. This chain is Prolow-density lipoprotein receptor-related protein 1, found in Rattus norvegicus (Rat).